The primary structure comprises 1228 residues: Serine/threonine-protein kinase CST20 (1228 aa).

A compositionally biased stretch (polar residues) spans 1–18 (MSILSENNPTQTSITDPN). Disordered stretches follow at residues 1 to 382 (MSIL…TAHN) and 405 to 468 (NSTN…HSQE). Low complexity-rich tracts occupy residues 57 to 70 (NTTSANTSSLSLGS) and 95 to 123 (ESGSSDIDDSQQSHNNNNNNNNNESNPES). Residues 148–159 (HQGDDSDNEKQY) are compositionally biased toward basic and acidic residues. Composition is skewed to polar residues over residues 173-195 (DSYSPGTLESPGTLNALETNNVS), 205-222 (TSSLEDLSLSLQHQNENA), and 232-244 (PQVSTSKTSSFHD). Low complexity predominate over residues 246 to 255 (SSVISSSTSV). Composition is skewed to polar residues over residues 260 to 275 (SNPTSTRGSHLSSYKS) and 309 to 328 (DTLSSATNSPNLLRNDTLQG). A compositionally biased stretch (low complexity) spans 347–367 (NTSATSRNTSGTSTSTVVKNS). A compositionally biased stretch (polar residues) spans 368-382 (RSGTSKLTSTSTAHN). Residues 437 to 466 (KVRGVFSSMFGKNKSTSSSSSSNSGSNSHS) are compositionally biased toward low complexity. Residues 473–486 (ISTPFNAKHLAHVG) enclose the CRIB domain. 2 disordered regions span residues 543–829 (FHFD…ALAD) and 865–917 (LREK…KQAA). Over residues 548-559 (NKSSSSGWSNEN) the composition is skewed to polar residues. Residues 568-579 (SNSGSGGGGGGA) show a composition bias toward gly residues. Polar residues predominate over residues 602–611 (ITPSQSMPTK). The span at 612 to 626 (TESKQSENQHPHEDN) shows a compositional bias: basic and acidic residues. The span at 627–640 (ATQYTPRTPTSHVQ) shows a compositional bias: polar residues. 3 stretches are compositionally biased toward low complexity: residues 668–681 (PSSQSLPRSDSQSD), 693–708 (ISPSKIKIRSISSKSL), and 734–747 (SIPKSKSHSASLSS). Positions 748–759 (QLRPATNGSTTA) are enriched in polar residues. Positions 787 to 805 (APPPPPSASPAPPVPPAPP) are enriched in pro residues. Residues 809–824 (LSEQTSEIPQQRTAPS) are compositionally biased toward polar residues. Positions 865–874 (LREKNERQNR) are enriched in basic and acidic residues. Polar residues predominate over residues 875-890 (QQETGQNNADTASGGS). Residues 951-1203 (YVDLVKIGQG…ADELLHDNFI (253 aa)) enclose the Protein kinase domain. ATP is bound by residues 957 to 965 (IGQGASGGV) and K981. The active-site Proton acceptor is D1071.

It belongs to the protein kinase superfamily. STE Ser/Thr protein kinase family. STE20 subfamily.

The protein resides in the cytoplasm. The protein localises to the nucleus. The catalysed reaction is L-seryl-[protein] + ATP = O-phospho-L-seryl-[protein] + ADP + H(+). The enzyme catalyses L-threonyl-[protein] + ATP = O-phospho-L-threonyl-[protein] + ADP + H(+). Its function is as follows. MAP4K component of the MAPK pathway required for the mating pheromone response, and the regulation of cell polarity and cell cycle. Phosphorylates histone H2B to form H2BS10ph. Required for hyphal formation and virulence. In Candida albicans (strain SC5314 / ATCC MYA-2876) (Yeast), this protein is Serine/threonine-protein kinase CST20 (CST20).